A 375-amino-acid polypeptide reads, in one-letter code: tRNA-specific 2-thiouridylase MnmA 3 (375 aa).

ATP is bound by residues 11–18 (GMSGGIDS) and Met-37. Catalysis depends on Cys-104, which acts as the Nucleophile. Residues Cys-104 and Cys-201 are joined by a disulfide bond. Gly-128 serves as a coordination point for ATP. The interval 150 to 152 (KDQ) is interaction with tRNA. Cys-201 (cysteine persulfide intermediate) is an active-site residue. Residues 309-310 (RY) are interaction with tRNA.

This sequence belongs to the MnmA/TRMU family.

It localises to the cytoplasm. It catalyses the reaction S-sulfanyl-L-cysteinyl-[protein] + uridine(34) in tRNA + AH2 + ATP = 2-thiouridine(34) in tRNA + L-cysteinyl-[protein] + A + AMP + diphosphate + H(+). Functionally, catalyzes the 2-thiolation of uridine at the wobble position (U34) of tRNA, leading to the formation of s(2)U34. In Phocaeicola vulgatus (strain ATCC 8482 / DSM 1447 / JCM 5826 / CCUG 4940 / NBRC 14291 / NCTC 11154) (Bacteroides vulgatus), this protein is tRNA-specific 2-thiouridylase MnmA 3.